Reading from the N-terminus, the 254-residue chain is Receptor expression-enhancing protein 2 (254 aa).

The next 2 membrane-spanning stretches (helical) occupy residues 1 to 21 (MVSW…YPAY) and 35 to 55 (YVKW…ETLT). Serine 152 carries the phosphoserine modification. Residues 164-254 (ALPLQGPDGR…KKTSAGGDSA (91 aa)) form a disordered region. A compositionally biased stretch (polar residues) spans 195–204 (SVRSGTNQAD). A compositionally biased stretch (basic and acidic residues) spans 205-219 (PRTEISEDDTGDKAP).

This sequence belongs to the DP1 family. As to quaternary structure, interacts with odorant receptor proteins.

It localises to the membrane. Functionally, required for endoplasmic reticulum (ER) network formation, shaping and remodeling. May enhance the cell surface expression of odorant receptors. This is Receptor expression-enhancing protein 2 (REEP2) from Bos taurus (Bovine).